Here is a 136-residue protein sequence, read N- to C-terminus: Small ribosomal subunit protein bS16 (136 aa).

The span at 113 to 122 (LALKSHRRSA) shows a compositional bias: basic residues. A disordered region spans residues 113–136 (LALKSHRRSAKKEAEAKAATGGEA).

Belongs to the bacterial ribosomal protein bS16 family.

The sequence is that of Small ribosomal subunit protein bS16 from Pelodictyon phaeoclathratiforme (strain DSM 5477 / BU-1).